Consider the following 299-residue polypeptide: Prohibitin-2 (299 aa).

Residue Ala-2 is modified to N-acetylalanine. Positions 19-49 (MGTALKLLLGAGAVAYGVRESVFTVEGGHRA) are necessary for transcriptional repression. Tyr-128 carries the phosphotyrosine modification. At Lys-147 the chain carries N6-acetyllysine. Residues 150–174 (ASQLITQRAQVSLLIRRELTERAKD) are necessary for transcriptional repression. A Phosphoserine modification is found at Ser-151. The stretch at 190-238 (SREYTAAVEAKQVAQQEAQRAQFLVEKAKQEQRQKIVQAEGEAEAAKML) forms a coiled coil. An N6-acetyllysine mark is found at Lys-200, Lys-236, Lys-250, and Lys-262.

Belongs to the prohibitin family. The mitochondrial prohibitin complex consists of two subunits (PHB1 and PHB2), assembled into a membrane-associated ring-shaped supercomplex of approximately 1 mDa. Interacts with ESR1, HDAC1 and HDAC5. Interacts with ZNF703. Interacts with STOML2. Interacts with ARFGEF3. Interacts with SPHK2. Interacts with COX4I1; the interaction associates PHB2 with COX. Interacts with MAP1LC3B (membrane-bound form LC3-II); the interaction is direct and upon mitochondrial depolarization and proteasome-dependent outer membrane rupture. Interacts with IGFBP6 (via C-terminal domain). Interacts with CLPB. Interacts with CD86 (via cytoplasmic domain); the interactions increases after priming with CD40. Interacts with AFG3L2. Interacts with DNAJC19. Interacts with AKT2; this interaction may be important for myogenic differentiation. In terms of processing, phosphorylated. Tyrosine phosphorylation is indirectly stimulated by IGFBP6.

Its subcellular location is the mitochondrion inner membrane. It is found in the cytoplasm. The protein localises to the nucleus. The protein resides in the cell membrane. Functionally, protein with pleiotropic attributes mediated in a cell-compartment- and tissue-specific manner, which include the plasma membrane-associated cell signaling functions, mitochondrial chaperone, and transcriptional co-regulator of transcription factors and sex steroid hormones in the nucleus. In the mitochondria, together with PHB, forms large ring complexes (prohibitin complexes) in the inner mitochondrial membrane (IMM) and functions as a chaperone protein that stabilizes mitochondrial respiratory enzymes and maintains mitochondrial integrity in the IMM, which is required for mitochondrial morphogenesis, neuronal survival, and normal lifespan. The prohibitin complex, with DNAJC19, regulates cardiolipin remodeling and the protein turnover of OMA1 in a cardiolipin-binding manner. Also regulates cytochrome-c oxidase assembly (COX) and mitochondrial respiration. Binding to sphingoid 1-phosphate (SPP) modulates its regulator activity. Has a key role of mitophagy receptor involved in targeting mitochondria for autophagic degradation. Involved in mitochondrial-mediated antiviral innate immunity, activates RIG-I-mediated signal transduction and production of IFNB1 and pro-inflammatory cytokine IL6. Its function is as follows. In the nucleus, serves as transcriptional co-regulator. Acts as a mediator of transcriptional repression by nuclear hormone receptors via recruitment of histone deacetylases. Functions as an estrogen receptor (ER)-selective coregulator that potentiates the inhibitory activities of antiestrogens and represses the activity of estrogens. Competes with NCOA1 for modulation of ER transcriptional activity. In terms of biological role, in the plasma membrane, is involved in IGFBP6-induced cell migration. Cooperates with CD86 to mediate CD86-signaling in B lymphocytes that regulates the level of IgG1 produced through the activation of distal signaling intermediates. Upon CD40 engagement, required to activate NF-kappa-B signaling pathway via phospholipase C and protein kinase C activation. The chain is Prohibitin-2 (PHB2) from Pongo abelii (Sumatran orangutan).